Here is a 215-residue protein sequence, read N- to C-terminus: Ribosomal RNA small subunit methyltransferase G (215 aa).

S-adenosyl-L-methionine contacts are provided by residues Gly-78, Leu-83, 128–129 (AE), and Arg-146.

The protein belongs to the methyltransferase superfamily. RNA methyltransferase RsmG family.

It is found in the cytoplasm. It carries out the reaction guanosine(527) in 16S rRNA + S-adenosyl-L-methionine = N(7)-methylguanosine(527) in 16S rRNA + S-adenosyl-L-homocysteine. Functionally, specifically methylates the N7 position of guanine in position 527 of 16S rRNA. This chain is Ribosomal RNA small subunit methyltransferase G, found in Anaeromyxobacter dehalogenans (strain 2CP-1 / ATCC BAA-258).